A 366-amino-acid chain; its full sequence is Alanine racemase (366 aa).

K40 acts as the Proton acceptor; specific for D-alanine in catalysis. K40 carries the post-translational modification N6-(pyridoxal phosphate)lysine. Position 136 (R136) interacts with substrate. The active-site Proton acceptor; specific for L-alanine is Y263. M310 provides a ligand contact to substrate.

This sequence belongs to the alanine racemase family. Requires pyridoxal 5'-phosphate as cofactor.

The catalysed reaction is L-alanine = D-alanine. The protein operates within amino-acid biosynthesis; D-alanine biosynthesis; D-alanine from L-alanine: step 1/1. Its function is as follows. Catalyzes the interconversion of L-alanine and D-alanine. May also act on other amino acids. The polypeptide is Alanine racemase (alr) (Streptococcus equi subsp. equi (strain 4047)).